Consider the following 65-residue polypeptide: uncharacterized protein (65 aa).

This is an uncharacterized protein from Archaeoglobus fulgidus (strain ATCC 49558 / DSM 4304 / JCM 9628 / NBRC 100126 / VC-16).